A 938-amino-acid chain; its full sequence is Ubiquitin carboxyl-terminal hydrolase Usp2 (938 aa).

6 disordered regions span residues 1 to 53, 91 to 117, 130 to 254, 273 to 297, 360 to 410, and 500 to 610; these read MMLD…KVGA, KVKT…NTSR, FNGN…ISTT, EQNQ…HRYP, LSGQ…NLQQ, and KDAT…EKSE. Positions 22 to 36 are enriched in low complexity; it reads STTKTSSVVATSASS. Composition is skewed to low complexity over residues 137-158, 167-177, 198-227, and 275-289; these read TTTN…NTSN, STTATATSTST, MNGH…QRQQ, and NQVQ…PSSS. A compositionally biased stretch (polar residues) spans 392–410; that stretch reads ASRSNHGSQAGGSSSNLQQ. Low complexity-rich tracts occupy residues 502 to 555 and 574 to 583; these read ATTA…TARS and TSRSSIGTSS. Over residues 592-610 the composition is skewed to basic and acidic residues; sequence HNSDDGYKTASSSRDEKSE. Residues 613-938 enclose the USP domain; that stretch reads CGLRNIGNTC…SAYILFYERT (326 aa). C622 serves as the catalytic Nucleophile. C765, C768, C814, and C817 together coordinate Zn(2+). H895 acts as the Proton acceptor in catalysis.

Belongs to the peptidase C19 family. In terms of assembly, interacts (via N-terminus) with imd (via N-terminus). Interacts with Rpt6.

The enzyme catalyses Thiol-dependent hydrolysis of ester, thioester, amide, peptide and isopeptide bonds formed by the C-terminal Gly of ubiquitin (a 76-residue protein attached to proteins as an intracellular targeting signal).. Its function is as follows. Hydrolase that deubiquitinates polyubiquitinated target proteins. Required for preventing the activation of the Toll signaling cascades under unchallenged conditions. Essential for bodily calcium homeostasis. Functionally, required for preventing the activation of the immune deficiency (Imd) signaling cascade under unchallenged conditions. Regulates the Imd pathway by specifically removing 'Lys-48'-linked ubiquitin from imd. Also promotes imd degradation probably by binding to imd and enhancing its association with the proteasome. The sequence is that of Ubiquitin carboxyl-terminal hydrolase Usp2 from Drosophila melanogaster (Fruit fly).